The following is a 126-amino-acid chain: Probable V-type proton ATPase subunit G (126 aa).

Belongs to the V-ATPase G subunit family. In terms of assembly, V-ATPase is a heteromultimeric enzyme made up of two complexes: the ATP-hydrolytic V1 complex and the proton translocation V0 complex. The V1 complex consists of three catalytic AB heterodimers that form a heterohexamer, three peripheral stalks each consisting of EG heterodimers, one central rotor including subunits D and F, and the regulatory subunits C and H. The proton translocation complex V0 consists of the proton transport subunit a, a ring of proteolipid subunits c9c'', rotary subunit d, subunits e and f, and the accessory subunits vah-19/Ac45 and vah-20/PRR. Interacts with ced-1.

Its function is as follows. Subunit of the V1 complex of vacuolar(H+)-ATPase (V-ATPase), a multisubunit enzyme composed of a peripheral complex (V1) that hydrolyzes ATP and a membrane integral complex (V0) that translocates protons. V-ATPase is responsible for acidifying and maintaining the pH of intracellular compartments and in some cell types, is targeted to the plasma membrane, where it is responsible for acidifying the extracellular environment. In neurons, required for necrotic cell death by promoting intracellular acidification. The chain is Probable V-type proton ATPase subunit G from Caenorhabditis elegans.